Consider the following 73-residue polypeptide: Putative defensin-like protein 270 (73 aa).

A signal peptide spans 1–23; that stretch reads MMSSKSHFVALLLIIFLIVNVQS. Disulfide bonds link Cys-33–Cys-72, Cys-39–Cys-60, Cys-45–Cys-70, and Cys-49–Cys-71.

This sequence belongs to the DEFL family.

The protein resides in the secreted. The chain is Putative defensin-like protein 270 from Arabidopsis thaliana (Mouse-ear cress).